The primary structure comprises 482 residues: GTPase Obg (482 aa).

The Obg domain maps to 2–159 (PRFVDRVVIH…VDLTLELKTV (158 aa)). An OBG-type G domain is found at 160–340 (ADVGLVGFPS…LTFALWEMIV (181 aa)). GTP is bound by residues 166–173 (GFPSAGKS), 191–195 (FTTLV), 212–215 (DVPG), 292–295 (NKVD), and 321–323 (STL). Mg(2+) contacts are provided by S173 and T193. The region spanning 358-438 (PIPVDESGFT…IGDMTFDWEP (81 aa)) is the OCT domain. Residues 441 to 482 (PAGVDVTMSGRGTDARIDKTDRVGAAERRQARRVRRGQVEPE) are disordered. Over residues 453-469 (TDARIDKTDRVGAAERR) the composition is skewed to basic and acidic residues.

Belongs to the TRAFAC class OBG-HflX-like GTPase superfamily. OBG GTPase family. In terms of assembly, monomer. Mg(2+) serves as cofactor.

Its subcellular location is the cytoplasm. In terms of biological role, an essential GTPase which binds GTP, GDP and possibly (p)ppGpp with moderate affinity, with high nucleotide exchange rates and a fairly low GTP hydrolysis rate. Plays a role in control of the cell cycle, stress response, ribosome biogenesis and in those bacteria that undergo differentiation, in morphogenesis control. The polypeptide is GTPase Obg (Mycobacteroides abscessus (strain ATCC 19977 / DSM 44196 / CCUG 20993 / CIP 104536 / JCM 13569 / NCTC 13031 / TMC 1543 / L948) (Mycobacterium abscessus)).